The chain runs to 491 residues: 2,3-bisphosphoglycerate-independent phosphoglycerate mutase (491 aa).

Positions 11 and 61 each coordinate Mn(2+). Catalysis depends on S61, which acts as the Phosphoserine intermediate. Substrate-binding positions include H118, 147 to 148 (RD), R177, R183, 247 to 250 (RNDR), and K320. 5 residues coordinate Mn(2+): D386, H390, D427, H428, and H445.

It belongs to the BPG-independent phosphoglycerate mutase family. As to quaternary structure, monomer. The cofactor is Mn(2+).

It catalyses the reaction (2R)-2-phosphoglycerate = (2R)-3-phosphoglycerate. It functions in the pathway carbohydrate degradation; glycolysis; pyruvate from D-glyceraldehyde 3-phosphate: step 3/5. Functionally, catalyzes the interconversion of 2-phosphoglycerate and 3-phosphoglycerate. The polypeptide is 2,3-bisphosphoglycerate-independent phosphoglycerate mutase (Helicobacter pylori (strain ATCC 700392 / 26695) (Campylobacter pylori)).